A 270-amino-acid polypeptide reads, in one-letter code: Ribosomal RNA-processing protein 7 homolog (270 aa).

A coiled-coil region spans residues 233–268 (TFQIKKNRQEKAQELLKKFEEDRKRITQLKQARNFK).

It belongs to the RRP7 family.

In Caenorhabditis elegans, this protein is Ribosomal RNA-processing protein 7 homolog.